A 368-amino-acid chain; its full sequence is F-box protein At3g17710 (368 aa).

The region spanning 1–46 (MASVKLPWDLEEEILSRLPPRSLVRFRTVCKHWNGLFSDKRFVKKH) is the F-box domain.

In Arabidopsis thaliana (Mouse-ear cress), this protein is F-box protein At3g17710.